We begin with the raw amino-acid sequence, 100 residues long: Large ribosomal subunit protein uL23 (100 aa).

It belongs to the universal ribosomal protein uL23 family. In terms of assembly, part of the 50S ribosomal subunit. Contacts protein L29, and trigger factor when it is bound to the ribosome.

Its function is as follows. One of the early assembly proteins it binds 23S rRNA. One of the proteins that surrounds the polypeptide exit tunnel on the outside of the ribosome. Forms the main docking site for trigger factor binding to the ribosome. In Aggregatibacter actinomycetemcomitans (Actinobacillus actinomycetemcomitans), this protein is Large ribosomal subunit protein uL23.